Consider the following 254-residue polypeptide: Chaperone protein PmfD (254 aa).

The N-terminal stretch at 1–26 (MNSFSTLKTLFCGSLLALSLVNTTQA) is a signal peptide.

The protein belongs to the periplasmic pilus chaperone family.

It localises to the periplasm. Functionally, involved in the biogenesis of the PMF fimbria. This chain is Chaperone protein PmfD (pmfD), found in Proteus mirabilis (strain HI4320).